A 117-amino-acid chain; its full sequence is Small ribosomal subunit protein bS6 (117 aa).

Residues H96–R117 form a disordered region.

It belongs to the bacterial ribosomal protein bS6 family.

Its function is as follows. Binds together with bS18 to 16S ribosomal RNA. The polypeptide is Small ribosomal subunit protein bS6 (Jannaschia sp. (strain CCS1)).